We begin with the raw amino-acid sequence, 193 residues long: Pyridoxal 5'-phosphate synthase subunit PdxT (193 aa).

L-glutamine is bound at residue G48–S50. C80 serves as the catalytic Nucleophile. L-glutamine contacts are provided by residues R109 and I137 to R138. Active-site charge relay system residues include H173 and E175.

This sequence belongs to the glutaminase PdxT/SNO family. In the presence of PdxS, forms a dodecamer of heterodimers. Only shows activity in the heterodimer.

The enzyme catalyses aldehydo-D-ribose 5-phosphate + D-glyceraldehyde 3-phosphate + L-glutamine = pyridoxal 5'-phosphate + L-glutamate + phosphate + 3 H2O + H(+). It carries out the reaction L-glutamine + H2O = L-glutamate + NH4(+). It functions in the pathway cofactor biosynthesis; pyridoxal 5'-phosphate biosynthesis. In terms of biological role, catalyzes the hydrolysis of glutamine to glutamate and ammonia as part of the biosynthesis of pyridoxal 5'-phosphate. The resulting ammonia molecule is channeled to the active site of PdxS. The polypeptide is Pyridoxal 5'-phosphate synthase subunit PdxT (Mycobacteroides abscessus (strain ATCC 19977 / DSM 44196 / CCUG 20993 / CIP 104536 / JCM 13569 / NCTC 13031 / TMC 1543 / L948) (Mycobacterium abscessus)).